The following is a 305-amino-acid chain: Tyrosine recombinase XerC (305 aa).

Residues 1-93 (MVLDGFAAYF…AWRQYCAWLV (93 aa)) enclose the Core-binding (CB) domain. The region spanning 114–294 (RVPKALPQEW…DFDHIARLYD (181 aa)) is the Tyr recombinase domain. Catalysis depends on residues arginine 155, lysine 179, histidine 246, arginine 249, and histidine 272. Tyrosine 281 (O-(3'-phospho-DNA)-tyrosine intermediate) is an active-site residue.

Belongs to the 'phage' integrase family. XerC subfamily. As to quaternary structure, forms a cyclic heterotetrameric complex composed of two molecules of XerC and two molecules of XerD.

Its subcellular location is the cytoplasm. Functionally, site-specific tyrosine recombinase, which acts by catalyzing the cutting and rejoining of the recombining DNA molecules. The XerC-XerD complex is essential to convert dimers of the bacterial chromosome into monomers to permit their segregation at cell division. It also contributes to the segregational stability of plasmids. The polypeptide is Tyrosine recombinase XerC (Neisseria gonorrhoeae (strain ATCC 700825 / FA 1090)).